A 375-amino-acid chain; its full sequence is Enoyl-[acyl-carrier-protein] reductase, mitochondrial (375 aa).

The N-terminal 37 residues, 1 to 37 (MAALMESVVGRALKFSSTANFRSIRRGETPTLCIKSF), are a transit peptide targeting the mitochondrion. Catalysis depends on Tyr96, which acts as the Proton donor. NADP(+) contacts are provided by residues Asn169, 195–198 (TSIV), 218–220 (RDR), 287–290 (YGGM), 312–314 (FWL), and Lys370.

This sequence belongs to the zinc-containing alcohol dehydrogenase family. Quinone oxidoreductase subfamily. In terms of assembly, homodimer.

Its subcellular location is the mitochondrion. It carries out the reaction a 2,3-saturated acyl-[ACP] + NADP(+) = a (2E)-enoyl-[ACP] + NADPH + H(+). In terms of biological role, catalyzes the NADPH-dependent reduction of trans-2-enoyl thioesters in mitochondrial fatty acid synthesis (fatty acid synthesis type II). Fatty acid chain elongation in mitochondria uses acyl carrier protein (ACP) as an acyl group carrier, but the enzyme accepts both ACP and CoA thioesters as substrates in vitro. The polypeptide is Enoyl-[acyl-carrier-protein] reductase, mitochondrial (Arabidopsis thaliana (Mouse-ear cress)).